The sequence spans 576 residues: RNA-binding post-transcriptional regulator cip2 (576 aa).

Positions 232–310 constitute an RRM domain; that stretch reads TAIVIKNIPF…RRLRVEWKRQ (79 aa). An R3H domain is found at 355–420; sequence DPAILNVYSH…AKQVVITMPS (66 aa).

In terms of assembly, interacts with csx1. Phosphorylated by sty1.

The protein resides in the cytoplasm. In terms of biological role, regulates global gene expression after oxidative stress. Interacts and stabilizes mRNAs and may regulate their transition between different cytoplasmic components after oxidative stress. This chain is RNA-binding post-transcriptional regulator cip2 (cip2), found in Schizosaccharomyces pombe (strain 972 / ATCC 24843) (Fission yeast).